We begin with the raw amino-acid sequence, 602 residues long: Elongation factor 4 (602 aa).

The region spanning 7–188 (ENIRNFSIIA…SIIRLVPPPK (182 aa)) is the tr-type G domain. GTP is bound by residues 19–24 (DHGKST) and 135–138 (NKID).

It belongs to the TRAFAC class translation factor GTPase superfamily. Classic translation factor GTPase family. LepA subfamily.

The protein resides in the cell inner membrane. The enzyme catalyses GTP + H2O = GDP + phosphate + H(+). In terms of biological role, required for accurate and efficient protein synthesis under certain stress conditions. May act as a fidelity factor of the translation reaction, by catalyzing a one-codon backward translocation of tRNAs on improperly translocated ribosomes. Back-translocation proceeds from a post-translocation (POST) complex to a pre-translocation (PRE) complex, thus giving elongation factor G a second chance to translocate the tRNAs correctly. Binds to ribosomes in a GTP-dependent manner. The chain is Elongation factor 4 from Chlamydia trachomatis serovar L2 (strain ATCC VR-902B / DSM 19102 / 434/Bu).